The chain runs to 428 residues: tRNA(Ile2) 2-agmatinylcytidine synthetase TiaS (428 aa).

Belongs to the TiaS family.

The protein localises to the cytoplasm. It catalyses the reaction cytidine(34) in tRNA(Ile2) + agmatine + ATP + H2O = 2-agmatinylcytidine(34) in tRNA(Ile2) + AMP + 2 phosphate + 2 H(+). In terms of biological role, ATP-dependent agmatine transferase that catalyzes the formation of 2-agmatinylcytidine (agm2C) at the wobble position (C34) of tRNA(Ile2), converting the codon specificity from AUG to AUA. The polypeptide is tRNA(Ile2) 2-agmatinylcytidine synthetase TiaS (Methanosarcina acetivorans (strain ATCC 35395 / DSM 2834 / JCM 12185 / C2A)).